The sequence spans 576 residues: Probable vesicular glutamate transporter eat-4 (576 aa).

Residues 1 to 69 lie on the Cytoplasmic side of the membrane; that stretch reads MSSWNEAWDR…QTWIGKCRKR (69 aa). A disordered region spans residues 25 to 46; that stretch reads AAASATGAAPPQQMQEEGNENP. The segment covering 36-46 has biased composition (polar residues); that stretch reads QQMQEEGNENP. Residues 70 to 90 form a helical membrane-spanning segment; it reads WLLAILANMGFMISFGIRCNF. The Extracellular segment spans residues 91-121; sequence GAAKTHMYKNYTDPYGKVHMHEFNWTIDELS. N-linked (GlcNAc...) asparagine glycosylation is found at N100 and N114. Residues 122 to 142 form a helical membrane-spanning segment; it reads VMESSYFYGYLVTQIPAGFLA. Residues 143–150 are Cytoplasmic-facing; that stretch reads AKFPPNKL. The helical transmembrane segment at 151-171 threads the bilayer; sequence FGFGIGVGAFLNILLPYGFKV. Residues 172–174 lie on the Extracellular side of the membrane; sequence KSD. The chain crosses the membrane as a helical span at residues 175 to 195; the sequence is YLVAFIQITQGLVQGVCYPAM. The Cytoplasmic portion of the chain corresponds to 196–213; sequence HGVWRYWAPPMERSKLAT. A helical transmembrane segment spans residues 214 to 234; that stretch reads TAFTGSYAGAVLGLPLSAFLV. At 235–239 the chain is on the extracellular side; that stretch reads SYVSW. A helical transmembrane segment spans residues 240–260; it reads AAPFYLYGVCGVIWAILWFCV. Residues 261–305 are Cytoplasmic-facing; sequence TFEKPAFHPTISQEEKIFIEDAIGHVSNTHPTIRSIPWKAIVTSK. A helical transmembrane segment spans residues 306 to 325; sequence PVWAIIVANFARSWTFYLLL. Topologically, residues 326–344 are extracellular; it reads QNQLTYMKEALGMKIADSG. A helical membrane pass occupies residues 345 to 365; the sequence is LLAAIPHLVMGCVVLMGGQLA. Residues 366-381 lie on the Cytoplasmic side of the membrane; it reads DYLRSNKILSTTAVRK. Residues 382–402 traverse the membrane as a helical segment; that stretch reads IFNCGGFGGEAAFMLIVAYTT. The Extracellular portion of the chain corresponds to 403–406; it reads SDTT. The helical transmembrane segment at 407 to 427 threads the bilayer; it reads AIMALIAAVGMSGFAISGFNV. Over 428–437 the chain is Cytoplasmic; it reads NHLDIAPRYA. Residues 438-458 traverse the membrane as a helical segment; that stretch reads AILMGFSNGIGTLAGLTCPFV. Residues 459 to 471 are Extracellular-facing; that stretch reads TEAFTAHSKHGWT. A helical membrane pass occupies residues 472–492; the sequence is SVFLLASLIHFTGVTFYAVYA. Residues 493–576 are Cytoplasmic-facing; sequence SGELQEWAEP…VVENPHYQQW (84 aa).

This sequence belongs to the major facilitator superfamily. Sodium/anion cotransporter family. VGLUT subfamily. In terms of tissue distribution, expressed in neurons of the pharynx and the extrapharyngeal nervous system. Highly expressed in male PHC sensory neurons.

The protein localises to the cell membrane. It is found in the synapse. In terms of biological role, required for glutamatergic synaptic transmission. In AWB and AWC sensory neurons, required for the detection of preferred food sources, probably via glutamatergic neurotransmission from sensory neurons. Negatively regulates the turning step of male mating behavior. The chain is Probable vesicular glutamate transporter eat-4 from Caenorhabditis elegans.